The following is a 105-amino-acid chain: Met repressor (105 aa).

It belongs to the MetJ family. In terms of assembly, homodimer.

It is found in the cytoplasm. In terms of biological role, this regulatory protein, when combined with SAM (S-adenosylmethionine) represses the expression of the methionine regulon and of enzymes involved in SAM synthesis. The chain is Met repressor from Shigella boydii serotype 18 (strain CDC 3083-94 / BS512).